The chain runs to 515 residues: Vesicular acetylcholine transporter (515 aa).

Over 1 to 40 the chain is Cytoplasmic; sequence MGVTMAVGLAKAAMGKISSAIGERSKRISGAMNEPRRKRK. The chain crosses the membrane as a helical span at residues 41–61; it reads ILLVIVCIAMLLDNMLYMVIV. Topologically, residues 62–112 are lumenal, vesicle; the sequence is PIIPNYLETIRTYKLVYITTPSNGTNGSLLNSTQRAVLERNPNANEDIQIG. 3 N-linked (GlcNAc...) asparagine glycosylation sites follow: asparagine 84, asparagine 87, and asparagine 92. Residues 113–133 traverse the membrane as a helical segment; it reads VLFASKAILQLLSNPFTGTFI. The Cytoplasmic portion of the chain corresponds to 134–139; it reads DRVGYD. Residues 140-160 traverse the membrane as a helical segment; that stretch reads IPLLIGLTIMFFSTITFAFGE. At 161-169 the chain is on the lumenal, vesicle side; that stretch reads SYAVLFAAR. A helical membrane pass occupies residues 170–190; it reads SLQGLGSAFADTSGIAMIADK. Topologically, residues 191 to 201 are cytoplasmic; it reads YTEESERTQAL. A helical membrane pass occupies residues 202–222; it reads GIALAFISFGSLVAPPFGGVL. Residues 223–229 lie on the Lumenal, vesicle side of the membrane; the sequence is YQFAGKW. The chain crosses the membrane as a helical span at residues 230–250; that stretch reads VPFLVLSFVCLLDGILLLMVV. Residues 251 to 271 are Cytoplasmic-facing; the sequence is TPFASRTRENMLQGTPIYKLM. The helical transmembrane segment at 272–292 threads the bilayer; sequence IDPYIAVVAGALTTCNIPLAF. At 293–310 the chain is on the lumenal, vesicle side; it reads LEPTISNWMKKTMNASEW. A glycan (N-linked (GlcNAc...) asparagine) is linked at asparagine 306. The chain crosses the membrane as a helical span at residues 311–331; that stretch reads QMGITWLPAFFPHILGVYITV. Residues 332–341 are Cytoplasmic-facing; sequence KLAAKYPNYQ. The chain crosses the membrane as a helical span at residues 342-362; the sequence is WFYGAVGLVIIGASSCTIPAC. At 363 to 367 the chain is on the lumenal, vesicle side; sequence RNFEE. Residues 368 to 388 form a helical membrane-spanning segment; sequence LIIPLCALCFGIALVDTALLP. Topologically, residues 389-404 are cytoplasmic; the sequence is TLAFLVDIRYVSVYGS. A helical transmembrane segment spans residues 405–425; sequence VYAIADISYSVAYALGPIMAG. At 426-432 the chain is on the lumenal, vesicle side; that stretch reads QIVHDLG. A helical transmembrane segment spans residues 433–453; it reads FVQLNLGMGLVNILYAPALLF. Over 454–515 the chain is Cytoplasmic; it reads LRNVCQMKPS…VLSDQEGYSE (62 aa). Residues 489–515 form a disordered region; that stretch reads AAKEPHGSSSGNHSVHAVLSDQEGYSE.

Belongs to the major facilitator superfamily. Vesicular transporter family. Electric lobe.

It localises to the membrane. In terms of biological role, involved in acetylcholine transport into synaptic vesicles. The protein is Vesicular acetylcholine transporter of Tetronarce californica (Pacific electric ray).